Here is a 360-residue protein sequence, read N- to C-terminus: sn-glycerol-3-phosphate import ATP-binding protein UgpC (360 aa).

The region spanning 4–235 is the ABC transporter domain; the sequence is LSLKGVRKSY…PATTFVASFI (232 aa). Residue 37–44 coordinates ATP; that stretch reads GPSGCGKS.

It belongs to the ABC transporter superfamily. sn-glycerol-3-phosphate importer (TC 3.A.1.1.3) family. In terms of assembly, the complex is composed of two ATP-binding proteins (UgpC), two transmembrane proteins (UgpA and UgpE) and a solute-binding protein (UgpB).

The protein resides in the cell inner membrane. It carries out the reaction sn-glycerol 3-phosphate(out) + ATP + H2O = sn-glycerol 3-phosphate(in) + ADP + phosphate + H(+). In terms of biological role, part of the ABC transporter complex UgpBAEC involved in sn-glycerol-3-phosphate (G3P) import. Responsible for energy coupling to the transport system. The chain is sn-glycerol-3-phosphate import ATP-binding protein UgpC from Burkholderia pseudomallei (strain K96243).